A 579-amino-acid chain; its full sequence is MPALRKHPQTATKHLFVTGGVVSSLGKGLTGSSLGQLLTARGLQVTMQKLDPYLNVDPGTMNPFQHGEVFVTEDGAETDLDVGHYERFLDRNLSGSANVTTGQIYSSVIAKERRGEYLGDTVQVIPHITDEIKSRILAMAAPDEHGNRPDVVITEVGGTVGDIESLPFLEAARQVRHEVGRENCFFLHCSLVPYMAPSGELKTKPTQHSVAALRSIGIQPDALILRCDRDVPEALKNKIALMCDVDIDGVISTPDAPSIYDIPKVLHREELDAYVVRRLNLPFRDVDWTQWNDLLKRVHEPHETVRIALVGKYIDLSDAYLSVTEALRAGGFFHHAKVEMRWVASDDCELDSGAAAALADVDGVLIPGGFGIRGIEGKIGAISYARKRGLPVLGLCLGLQCIVIEAARSVGITGANSAEFDPATPDPVISTMADQRDAVAGAADLGGTMRLGAYPAVLEEDSIVARAYQATEVSERHRHRYEVNNAYRDRIAESGLRFSGTSPDGHLVEFVEYDAEQHPFLVGTQAHPELKSRPTRPHPLFAAFIGAALDYKAAERLPVEIPEQRSNGVELLQEPASRG.

The amidoligase domain stretch occupies residues 1–281 (MPALRKHPQT…DAYVVRRLNL (281 aa)). S23 provides a ligand contact to CTP. Position 23 (S23) interacts with UTP. ATP contacts are provided by residues 24–29 (SLGKGL) and D81. Mg(2+) is bound by residues D81 and E155. CTP is bound by residues 162–164 (DIE), 202–207 (KTKPTQ), and K238. UTP contacts are provided by residues 202-207 (KTKPTQ) and K238. Residues 306–554 (RIALVGKYID…IGAALDYKAA (249 aa)) form the Glutamine amidotransferase type-1 domain. G369 serves as a coordination point for L-glutamine. C396 functions as the Nucleophile; for glutamine hydrolysis in the catalytic mechanism. Residues 397 to 400 (LGLQ), E419, and R480 each bind L-glutamine. Residues H527 and E529 contribute to the active site.

This sequence belongs to the CTP synthase family. In terms of assembly, homotetramer.

It catalyses the reaction UTP + L-glutamine + ATP + H2O = CTP + L-glutamate + ADP + phosphate + 2 H(+). It carries out the reaction L-glutamine + H2O = L-glutamate + NH4(+). The catalysed reaction is UTP + NH4(+) + ATP = CTP + ADP + phosphate + 2 H(+). Its pathway is pyrimidine metabolism; CTP biosynthesis via de novo pathway; CTP from UDP: step 2/2. Allosterically activated by GTP, when glutamine is the substrate; GTP has no effect on the reaction when ammonia is the substrate. The allosteric effector GTP functions by stabilizing the protein conformation that binds the tetrahedral intermediate(s) formed during glutamine hydrolysis. Inhibited by the product CTP, via allosteric rather than competitive inhibition. Its function is as follows. Catalyzes the ATP-dependent amination of UTP to CTP with either L-glutamine or ammonia as the source of nitrogen. Regulates intracellular CTP levels through interactions with the four ribonucleotide triphosphates. This chain is CTP synthase, found in Mycobacterium sp. (strain KMS).